The following is a 247-amino-acid chain: Probable phosphatase Shew_1420 (247 aa).

Zn(2+)-binding residues include His-8, His-10, His-16, His-41, Glu-74, His-102, His-132, Asp-193, and His-195.

It belongs to the PHP family. The cofactor is Zn(2+).

The protein is Probable phosphatase Shew_1420 of Shewanella loihica (strain ATCC BAA-1088 / PV-4).